The chain runs to 490 residues: Transmembrane protease serine 2 (490 aa).

Over 1-83 the chain is Cytoplasmic; sequence MALNSGSPPG…ALCTSKSKKS (83 aa). A helical; Signal-anchor for type II membrane protein transmembrane segment spans residues 84–104; sequence LCLALALGTVLTGAAVAAVLL. The Extracellular segment spans residues 105-490; the sequence is WRFWDSNCST…WIYQQMRANS (386 aa). Asparagine 111 carries N-linked (GlcNAc...) asparagine glycosylation. Residues 111–149 form the LDL-receptor class A domain; sequence NCSTSEMECGSSGTCISSSLWCDGVAHCPNGEDENRCVR. Disulfide bonds link cysteine 112–cysteine 125, cysteine 119–cysteine 138, cysteine 132–cysteine 147, cysteine 171–cysteine 230, cysteine 184–cysteine 240, cysteine 243–cysteine 363, cysteine 279–cysteine 295, cysteine 408–cysteine 424, and cysteine 435–cysteine 463. Residues aspartate 133, valine 135, aspartate 143, and glutamate 144 each contribute to the Ca(2+) site. One can recognise an SRCR domain in the interval 150 to 242; the sequence is LYGQSFILQV…RMVVSLRCIE (93 aa). The N-linked (GlcNAc...) asparagine glycan is linked to asparagine 212. One can recognise a Peptidase S1 domain in the interval 254 to 487; sequence IVGGLNASPG…FTDWIYQQMR (234 aa). Active-site charge relay system residues include histidine 294 and aspartate 343. Residue serine 439 is the Charge relay system of the active site. Residue asparagine 474 is glycosylated (N-linked (GlcNAc...) asparagine).

It belongs to the peptidase S1 family. As to quaternary structure, the catalytically active form interacts with ACE2. Post-translationally, proteolytically processed; by an autocatalytic mechanism. Autocleavage induces active conformation. As to expression, larynx, trachea and bronchi, lung, prostate and kidney.

Its subcellular location is the cell membrane. It is found in the secreted. The enzyme catalyses The enzyme cleaves angiotensin-converting enzyme 2 (EC 3.4.17.23) and cleaves influenzea A and B virus and coronavirus spike glycoproteins at arginine residues.. Functionally, plasma membrane-anchored serine protease that cleaves at arginine residues. Participates in proteolytic cascades of relevance for the normal physiologic function of the prostate. Androgen-induced TMPRSS2 activates several substrates that include pro-hepatocyte growth factor/HGF, the protease activated receptor-2/F2RL1 or matriptase/ST14 leading to extracellular matrix disruption. In addition, activates trigeminal neurons and contribute to both spontaneous pain and mechanical allodynia. Its function is as follows. (Microbial infection) Essential for spread and pathogenesis of influenza A virus (strains H1N1, H3N2 and H7N9) and is involved in proteolytic cleavage and activation of hemagglutinin (HA) protein which is essential for viral infectivity. This chain is Transmembrane protease serine 2 (Tmprss2), found in Mus musculus (Mouse).